The following is a 441-amino-acid chain: Ribosomal protein uS12 methylthiotransferase RimO (441 aa).

One can recognise an MTTase N-terminal domain in the interval 6 to 116 (PKVGFVSLGC…VMTAVHANLP (111 aa)). [4Fe-4S] cluster is bound by residues Cys15, Cys51, Cys80, Cys147, Cys151, and Cys154. Positions 133-370 (LTPQHYAYLK…MEVQESISAE (238 aa)) constitute a Radical SAM core domain. The 67-residue stretch at 373-439 (RRKIGRIETV…GHDLWAAPPA (67 aa)) folds into the TRAM domain.

It belongs to the methylthiotransferase family. RimO subfamily. [4Fe-4S] cluster serves as cofactor.

The protein resides in the cytoplasm. The enzyme catalyses L-aspartate(89)-[ribosomal protein uS12]-hydrogen + (sulfur carrier)-SH + AH2 + 2 S-adenosyl-L-methionine = 3-methylsulfanyl-L-aspartate(89)-[ribosomal protein uS12]-hydrogen + (sulfur carrier)-H + 5'-deoxyadenosine + L-methionine + A + S-adenosyl-L-homocysteine + 2 H(+). Functionally, catalyzes the methylthiolation of an aspartic acid residue of ribosomal protein uS12. The protein is Ribosomal protein uS12 methylthiotransferase RimO of Methylobacillus flagellatus (strain ATCC 51484 / DSM 6875 / VKM B-1610 / KT).